Consider the following 360-residue polypeptide: C-C chemokine receptor-like 2 (360 aa).

Residues 1-42 are Extracellular-facing; that stretch reads MDNYTVAPDDEYDVLILDDYLDNSGPDQVPAPEFLSPQQVLQ. N-linked (GlcNAc...) asparagine glycosylation occurs at N3. The chain crosses the membrane as a helical span at residues 43–63; that stretch reads FCCAVFAVGLLDNVLAVFILV. The Cytoplasmic segment spans residues 64–73; the sequence is KYKGLKNLGN. A helical transmembrane segment spans residues 74–94; the sequence is IYFLNLALSNLCFLLPLPFWA. Over 95 to 109 the chain is Extracellular; it reads HTAAHGESPGNGTCK. Residue N105 is glycosylated (N-linked (GlcNAc...) asparagine). A disulfide bridge links C108 with C185. A helical transmembrane segment spans residues 110–130; that stretch reads VLVGLHSSGLYSEVFSNILLL. Over 131–141 the chain is Cytoplasmic; sequence VQGYRVFSQGR. The helical transmembrane segment at 142–162 threads the bilayer; that stretch reads LASIFTTVSCGIVACILAWAM. The Extracellular segment spans residues 163–202; that stretch reads ATALSLPESVFYEPRMERQKHKCAFGKPHFLPIEAPLWKY. The chain crosses the membrane as a helical span at residues 203–223; that stretch reads VLTSKMIILVLAFPLLVFIIC. At 224–243 the chain is on the cytoplasmic side; sequence CRQLRRRQSFRERQYDLHKP. Residues 244-264 traverse the membrane as a helical segment; that stretch reads ALVITGVFLLMWAPYNTVLFL. Residues 265 to 285 are Extracellular-facing; sequence SAFQEHLSLQDEKSSYHLDAS. Residues 286 to 307 form a helical membrane-spanning segment; that stretch reads VQVTQLVATTHCCVNPLLYLLL. The Cytoplasmic portion of the chain corresponds to 308 to 360; it reads DRKAFMRYLRSLFPRCNDIPYQSSGGYQQAPPREGHGRPIELYSNLHQRQDII.

This sequence belongs to the G-protein coupled receptor 1 family. Expressed in macrophages, astrocytes, in glial cells. Constitutively expressed by mast cells. Detected in bronchial epithelium in OVA-induced airway inflammation. Up-regulated during dendritic cell (DC) maturation.

It is found in the cell membrane. Receptor for CCL19 and chemerin/RARRES2. Does not appear to be a signaling receptor, but may have a role in modulating chemokine-triggered immune responses by capturing and internalizing CCL19 or by presenting RARRES2 ligand to CMKLR1, a functional signaling receptor. Plays a critical role for the development of Th2 responses. This Mus musculus (Mouse) protein is C-C chemokine receptor-like 2 (Ccrl2).